Consider the following 522-residue polypeptide: ATP synthase subunit alpha 2 (522 aa).

176–183 (GDRQTGKT) lines the ATP pocket.

The protein belongs to the ATPase alpha/beta chains family. As to quaternary structure, F-type ATPases have 2 components, CF(1) - the catalytic core - and CF(0) - the membrane proton channel. CF(1) has five subunits: alpha(3), beta(3), gamma(1), delta(1), epsilon(1). CF(0) has three main subunits: a(1), b(2) and c(9-12). The alpha and beta chains form an alternating ring which encloses part of the gamma chain. CF(1) is attached to CF(0) by a central stalk formed by the gamma and epsilon chains, while a peripheral stalk is formed by the delta and b chains.

The protein resides in the cell inner membrane. It carries out the reaction ATP + H2O + 4 H(+)(in) = ADP + phosphate + 5 H(+)(out). Its function is as follows. Produces ATP from ADP in the presence of a proton gradient across the membrane. The alpha chain is a regulatory subunit. The polypeptide is ATP synthase subunit alpha 2 (Syntrophotalea carbinolica (strain DSM 2380 / NBRC 103641 / GraBd1) (Pelobacter carbinolicus)).